Here is a 376-residue protein sequence, read N- to C-terminus: Putative glutamate--cysteine ligase 2-3 (376 aa).

This sequence belongs to the glutamate--cysteine ligase type 2 family. YbdK subfamily.

The catalysed reaction is L-cysteine + L-glutamate + ATP = gamma-L-glutamyl-L-cysteine + ADP + phosphate + H(+). In terms of biological role, ATP-dependent carboxylate-amine ligase which exhibits weak glutamate--cysteine ligase activity. The protein is Putative glutamate--cysteine ligase 2-3 of Nocardioides sp. (strain ATCC BAA-499 / JS614).